The following is a 474-amino-acid chain: Lipoprotein lipase (474 aa).

Residues 1–27 (MESKALLLVALGVWLQSLTAFRGGVAA) form the signal peptide. Positions 32-53 (RDFSDIESKFALRTPEDTAEDT) are interaction with GPIHBP1. C54 and C67 are oxidised to a cystine. An N-linked (GlcNAc...) asparagine glycan is attached at N70. A 3'-nitrotyrosine modification is found at Y121. The active-site Nucleophile is the S159. The active-site Charge relay system is D183. Y191 carries the post-translational modification 3'-nitrotyrosine. The Ca(2+) site is built by A194, R197, S199, and D202. A disulfide bridge connects residues C243 and C266. The segment at 243 to 266 (CNIGEAIRVIAEKGLGDVDQLVKC) is essential for determining substrate specificity. The active-site Charge relay system is the H268. 2 disulfides stabilise this stretch: C291/C310 and C302/C305. The region spanning 341-464 (FHYQVKIHFS…KGKDAAVFVK (124 aa)) is the PLAT domain. The residue at position 343 (Y343) is a 3'-nitrotyrosine. The N-linked (GlcNAc...) asparagine glycan is linked to N386. An important for interaction with lipoprotein particles region spans residues 417–421 (WSDWW). Positions 430–434 (KIRVK) are important for heparin binding. The segment at 443–467 (IFCAREKVSHLQKGKDAAVFVKCHD) is interaction with GPIHBP1. C445 and C465 are disulfide-bonded.

It belongs to the AB hydrolase superfamily. Lipase family. As to quaternary structure, homodimer. Interacts with GPIHBP1 with 1:1 stoichiometry. Interacts with APOC2; the interaction activates LPL activity in the presence of lipids. Interaction with heparan sulfate proteoglycans is required to protect LPL against loss of activity. Associates with lipoprotein particles in blood plasma. Interacts with LMF1 and SEL1L; interaction with SEL1L is required to prevent aggregation of newly synthesized LPL in the endoplasmic reticulum (ER), and for normal export of LPL from the ER to the extracellular space. Interacts with SORL1; SORL1 acts as a sorting receptor, promoting LPL localization to endosomes and later to lysosomes, leading to degradation of newly synthesized LPL. Post-translationally, tyrosine nitration after lipopolysaccharide (LPS) challenge down-regulates the lipase activity.

It is found in the cell membrane. The protein localises to the secreted. Its subcellular location is the extracellular space. The protein resides in the extracellular matrix. It catalyses the reaction a triacylglycerol + H2O = a diacylglycerol + a fatty acid + H(+). The enzyme catalyses a 1,2-diacyl-sn-glycero-3-phosphocholine + H2O = a 2-acyl-sn-glycero-3-phosphocholine + a fatty acid + H(+). It carries out the reaction 1,2,3-tri-(9Z-octadecenoyl)-glycerol + H2O = di-(9Z)-octadecenoylglycerol + (9Z)-octadecenoate + H(+). The catalysed reaction is 1,2-di-(9Z-octadecenoyl)-sn-glycero-3-phosphocholine + H2O = (9Z-octadecenoyl)-sn-glycero-3-phosphocholine + (9Z)-octadecenoate + H(+). It catalyses the reaction 1,2,3-tributanoylglycerol + H2O = dibutanoylglycerol + butanoate + H(+). The enzyme catalyses 1,2-dihexadecanoyl-sn-glycero-3-phosphocholine + H2O = hexadecanoyl-sn-glycero-3-phosphocholine + hexadecanoate + H(+). With respect to regulation, the apolipoprotein APOC2 acts as a coactivator of LPL activity. Ca(2+) binding promotes protein stability and formation of the active homodimer. Interaction with GPIHBP1 protects LPL against inactivation by ANGPTL4. Functionally, key enzyme in triglyceride metabolism. Catalyzes the hydrolysis of triglycerides from circulating chylomicrons and very low density lipoproteins (VLDL), and thereby plays an important role in lipid clearance from the blood stream, lipid utilization and storage. Although it has both phospholipase and triglyceride lipase activities it is primarily a triglyceride lipase with low but detectable phospholipase activity. Mediates margination of triglyceride-rich lipoprotein particles in capillaries. Recruited to its site of action on the luminal surface of vascular endothelium by binding to GPIHBP1 and cell surface heparan sulfate proteoglycans. In Rattus norvegicus (Rat), this protein is Lipoprotein lipase (Lpl).